The sequence spans 328 residues: NADH-cytochrome b5 reductase-like protein (328 aa).

In terms of domain architecture, FAD-binding FR-type spans 76–184 (DKWLEFKLQD…KGPVEKFKYS (109 aa)). A Phosphothreonine modification is found at Thr-201.

It belongs to the flavoprotein pyridine nucleotide cytochrome reductase family. It depends on FAD as a cofactor.

The protein localises to the mitochondrion. The catalysed reaction is 2 Fe(III)-[cytochrome b5] + NADH = 2 Fe(II)-[cytochrome b5] + NAD(+) + H(+). In terms of biological role, desaturation and elongation of fatty acids. In Arabidopsis thaliana (Mouse-ear cress), this protein is NADH-cytochrome b5 reductase-like protein (CBR2).